The primary structure comprises 85 residues: Small muscular protein (85 aa).

Residues 19–63 (PMGAFRPGAGQPPRRKESTPGTAEGAPATPEEKKPVPGMKKFPGP) are disordered. Ser-36 is modified (phosphoserine). Residue Thr-47 is modified to Phosphothreonine.

This sequence belongs to the SMPX family.

Its function is as follows. Plays a role in the regulatory network through which muscle cells coordinate their structural and functional states during growth, adaptation, and repair. This Rattus norvegicus (Rat) protein is Small muscular protein (Smpx).